The primary structure comprises 58 residues: Small ribosomal subunit protein bS21 (58 aa).

The protein belongs to the bacterial ribosomal protein bS21 family.

The chain is Small ribosomal subunit protein bS21 from Staphylococcus aureus (strain bovine RF122 / ET3-1).